Reading from the N-terminus, the 383-residue chain is Envelope glycoprotein D (383 aa).

The N-terminal stretch at 1–30 is a signal peptide; the sequence is MPAATMATPGYLACRTSVATLLFFVLLRRA. Residues 31-358 are Virion surface-facing; it reads AILGAGGAPS…PKVVGPTVGP (328 aa). Disulfide bonds link cysteine 76–cysteine 197, cysteine 115–cysteine 212, and cysteine 127–cysteine 136. A profusion region spans residues 244-311; that stretch reads YQDKLKVASP…TSASGVIEIE (68 aa). Residues 315–349 form a disordered region; it reads ESDVRLVSYPPPTLPSPGPGGNENGAGYSDNRPDP. Residues 323–332 show a composition bias toward pro residues; it reads YPPPTLPSPG. Residues 359 to 379 form a helical membrane-spanning segment; the sequence is GAIILVVMCAPILIGLTAFTI. Over 380 to 383 the chain is Intravirion; that stretch reads RKYC.

This sequence belongs to the herpesviridae glycoprotein D family.

Its subcellular location is the virion membrane. In terms of biological role, envelope glycoprotein that binds to host cell entry receptors, promoting the virus entry into host cells. May trigger fusion with host membrane, by recruiting the fusion machinery composed of gB and gH/gL. This chain is Envelope glycoprotein D (US6), found in Amazona oratrix (yellow-headed parrot).